A 321-amino-acid chain; its full sequence is Anthranilate phosphoribosyltransferase (321 aa).

5-phospho-alpha-D-ribose 1-diphosphate is bound by residues Gly-72, 75–76, Thr-80, 82–85, 99–107, and Ser-111; these read GD, NVST, and KHGNVSITS. Anthranilate is bound at residue Gly-72. Ser-84 contacts Mg(2+). Residue Asn-102 participates in anthranilate binding. Residue Arg-157 participates in anthranilate binding. Residues Asp-216 and Glu-217 each contribute to the Mg(2+) site.

This sequence belongs to the anthranilate phosphoribosyltransferase family. As to quaternary structure, homodimer. Mg(2+) is required as a cofactor.

The catalysed reaction is N-(5-phospho-beta-D-ribosyl)anthranilate + diphosphate = 5-phospho-alpha-D-ribose 1-diphosphate + anthranilate. It functions in the pathway amino-acid biosynthesis; L-tryptophan biosynthesis; L-tryptophan from chorismate: step 2/5. Its function is as follows. Catalyzes the transfer of the phosphoribosyl group of 5-phosphorylribose-1-pyrophosphate (PRPP) to anthranilate to yield N-(5'-phosphoribosyl)-anthranilate (PRA). The chain is Anthranilate phosphoribosyltransferase from Methanococcus maripaludis (strain C6 / ATCC BAA-1332).